The following is a 170-amino-acid chain: Transcription factor E (170 aa).

Positions 1–93 constitute an HTH TFE/IIEalpha-type domain; sequence MKDVYLYIVE…TWYVDDEIIK (93 aa).

Belongs to the TFE family. As to quaternary structure, monomer. Interaction with RNA polymerase subunits RpoF and RpoE is necessary for Tfe stimulatory transcription activity. Able to interact with Tbp and RNA polymerase in the absence of DNA promoter. Interacts both with the preinitiation and elongation complexes.

Transcription factor that plays a role in the activation of archaeal genes transcribed by RNA polymerase. Facilitates transcription initiation by enhancing TATA-box recognition by TATA-box-binding protein (Tbp), and transcription factor B (Tfb) and RNA polymerase recruitment. Not absolutely required for transcription in vitro, but particularly important in cases where Tbp or Tfb function is not optimal. It dynamically alters the nucleic acid-binding properties of RNA polymerases by stabilizing the initiation complex and destabilizing elongation complexes. Seems to translocate with the RNA polymerase following initiation and acts by binding to the non template strand of the transcription bubble in elongation complexes. The protein is Transcription factor E of Pyrobaculum aerophilum (strain ATCC 51768 / DSM 7523 / JCM 9630 / CIP 104966 / NBRC 100827 / IM2).